The following is a 345-amino-acid chain: Protease HtpX homolog (345 aa).

The next 2 helical transmembrane spans lie at 6-26 (TAML…LVGG) and 27-47 (SNGM…SYWN). Position 130 (H130) interacts with Zn(2+). E131 is a catalytic residue. A Zn(2+)-binding site is contributed by H134. The next 2 helical transmembrane spans lie at 145–165 (LTAT…FMGG) and 179–199 (IGGL…QMAI). Residue E204 participates in Zn(2+) binding.

This sequence belongs to the peptidase M48B family. It depends on Zn(2+) as a cofactor.

The protein resides in the cell inner membrane. The sequence is that of Protease HtpX homolog from Bartonella henselae (strain ATCC 49882 / DSM 28221 / CCUG 30454 / Houston 1) (Rochalimaea henselae).